Here is a 324-residue protein sequence, read N- to C-terminus: tRNA dimethylallyltransferase (324 aa).

17-24 (GPTASGKT) provides a ligand contact to ATP. 19–24 (TASGKT) contributes to the substrate binding site. 3 interaction with substrate tRNA regions span residues 42 to 45 (DSAL), 166 to 170 (QRIQR), and 251 to 256 (RCVGYR).

The protein belongs to the IPP transferase family. As to quaternary structure, monomer. Mg(2+) is required as a cofactor.

The enzyme catalyses adenosine(37) in tRNA + dimethylallyl diphosphate = N(6)-dimethylallyladenosine(37) in tRNA + diphosphate. In terms of biological role, catalyzes the transfer of a dimethylallyl group onto the adenine at position 37 in tRNAs that read codons beginning with uridine, leading to the formation of N6-(dimethylallyl)adenosine (i(6)A). This chain is tRNA dimethylallyltransferase, found in Burkholderia mallei (strain NCTC 10247).